A 363-amino-acid polypeptide reads, in one-letter code: sn-glycerol-3-phosphate import ATP-binding protein UgpC (363 aa).

Residues 4–235 enclose the ABC transporter domain; it reads VVLRNVRKTY…PATTFVASFI (232 aa). An ATP-binding site is contributed by 37-44; sequence GPSGCGKS.

This sequence belongs to the ABC transporter superfamily. sn-glycerol-3-phosphate importer (TC 3.A.1.1.3) family. As to quaternary structure, the complex is composed of two ATP-binding proteins (UgpC), two transmembrane proteins (UgpA and UgpE) and a solute-binding protein (UgpB).

It is found in the cell inner membrane. The catalysed reaction is sn-glycerol 3-phosphate(out) + ATP + H2O = sn-glycerol 3-phosphate(in) + ADP + phosphate + H(+). Part of the ABC transporter complex UgpBAEC involved in sn-glycerol-3-phosphate (G3P) import. Responsible for energy coupling to the transport system. This chain is sn-glycerol-3-phosphate import ATP-binding protein UgpC, found in Rhodopseudomonas palustris (strain ATCC BAA-98 / CGA009).